Here is a 649-residue protein sequence, read N- to C-terminus: Threonine--tRNA ligase (649 aa).

Residues 1–66 (MVQITLPDGS…DNDAQLAIVT (66 aa)) enclose the TGS domain. Residues 247 to 538 (DHRKIGRELD…LIENHAGAMP (292 aa)) are catalytic. Zn(2+) is bound by residues cysteine 338, histidine 389, and histidine 515.

This sequence belongs to the class-II aminoacyl-tRNA synthetase family. In terms of assembly, homodimer. Zn(2+) is required as a cofactor.

The protein localises to the cytoplasm. It catalyses the reaction tRNA(Thr) + L-threonine + ATP = L-threonyl-tRNA(Thr) + AMP + diphosphate + H(+). Functionally, catalyzes the attachment of threonine to tRNA(Thr) in a two-step reaction: L-threonine is first activated by ATP to form Thr-AMP and then transferred to the acceptor end of tRNA(Thr). Also edits incorrectly charged L-seryl-tRNA(Thr). The sequence is that of Threonine--tRNA ligase from Bordetella bronchiseptica (strain ATCC BAA-588 / NCTC 13252 / RB50) (Alcaligenes bronchisepticus).